The chain runs to 353 residues: Ribosome biogenesis protein BRX1 homolog (353 aa).

Residues 1 to 10 show a composition bias toward basic residues; it reads MAATKRKRRG. Residues 1–46 are disordered; it reads MAATKRKRRGGFAVQAKKPKRNEKDAEPPAKRHATAEEVEEEERDR. The segment covering 22 to 36 has biased composition (basic and acidic residues); sequence NEKDAEPPAKRHATA. The Brix domain occupies 60–249; it reads ERILIFSSRG…LIKIFQGSFG (190 aa). A Glycyl lysine isopeptide (Lys-Gly) (interchain with G-Cter in SUMO2) cross-link involves residue lysine 160. Residue serine 261 is modified to Phosphoserine. N6-acetyllysine is present on lysine 276. Residues lysine 314 and lysine 322 each participate in a glycyl lysine isopeptide (Lys-Gly) (interchain with G-Cter in SUMO2) cross-link.

The protein belongs to the BRX1 family.

Its subcellular location is the nucleus. The protein resides in the nucleolus. Required for biogenesis of the 60S ribosomal subunit. This is Ribosome biogenesis protein BRX1 homolog (BRIX1) from Pongo abelii (Sumatran orangutan).